The primary structure comprises 295 residues: Histamine N-methyltransferase (295 aa).

Alanine 2 carries the post-translational modification Blocked amino end (Ala). Glutamate 28 provides a ligand contact to substrate. Positions 60, 89, 94, 120, and 143 each coordinate S-adenosyl-L-methionine. A substrate-binding site is contributed by asparagine 284.

The protein belongs to the class I-like SAM-binding methyltransferase superfamily. HNMT family. In terms of assembly, monomer.

Its subcellular location is the cytoplasm. It carries out the reaction histamine + S-adenosyl-L-methionine = N(tau)-methylhistamine + S-adenosyl-L-homocysteine + H(+). Inactivates histamine by N-methylation. Plays an important role in degrading histamine and in regulating the airway response to histamine. This Rattus norvegicus (Rat) protein is Histamine N-methyltransferase (Hnmt).